Here is a 124-residue protein sequence, read N- to C-terminus: Ribonuclease pancreatic (124 aa).

Residues 1 to 13 (KETAAEKFQRQHM) are compositionally biased toward basic and acidic residues. The disordered stretch occupies residues 1–21 (KETAAEKFQRQHMDTSSSLSN). Substrate-binding residues include lysine 7 and arginine 10. Histidine 12 acts as the Proton acceptor in catalysis. Cystine bridges form between cysteine 26–cysteine 84, cysteine 40–cysteine 95, cysteine 58–cysteine 110, and cysteine 65–cysteine 72. Asparagine 34 carries N-linked (GlcNAc...) asparagine glycosylation. Substrate is bound by residues 41 to 45 (KPVNT), lysine 66, and arginine 85. Histidine 119 serves as the catalytic Proton donor.

Belongs to the pancreatic ribonuclease family. As to quaternary structure, monomer. Interacts with and forms tight 1:1 complexes with RNH1. Dimerization of two such complexes may occur. Interaction with RNH1 inhibits this protein. In terms of tissue distribution, pancreas.

It is found in the secreted. The enzyme catalyses an [RNA] containing cytidine + H2O = an [RNA]-3'-cytidine-3'-phosphate + a 5'-hydroxy-ribonucleotide-3'-[RNA].. It catalyses the reaction an [RNA] containing uridine + H2O = an [RNA]-3'-uridine-3'-phosphate + a 5'-hydroxy-ribonucleotide-3'-[RNA].. Endonuclease that catalyzes the cleavage of RNA on the 3' side of pyrimidine nucleotides. Acts on single-stranded and double-stranded RNA. The polypeptide is Ribonuclease pancreatic (RNASE1) (Hippopotamus amphibius (Hippopotamus)).